Consider the following 63-residue polypeptide: Large ribosomal subunit protein bL28 (63 aa).

The protein belongs to the bacterial ribosomal protein bL28 family.

The protein is Large ribosomal subunit protein bL28 of Acidobacterium capsulatum (strain ATCC 51196 / DSM 11244 / BCRC 80197 / JCM 7670 / NBRC 15755 / NCIMB 13165 / 161).